We begin with the raw amino-acid sequence, 430 residues long: MKQALRVAFGFLILWASVLHAEVRIVIDSGVDSGRPIGVVPFQWAGPGAAPEDIGGIVAADLRNSGKFNPLDRARLPQQPGSAQEVQPAAWSALGIDAVVVGQVTPNPDGSYNVAYQLVDTGGAPGTVLAQNSYKVNKQWLRYASHTASDEVFEKLTGIKGAFRTRIAYVVQTNGGQFPYELRVSDYDGYNQFVVHRSPQPLMSPAWSPDGSKLAYVTFESGRSALVIQTLANGAVRQVASFPRHNGAPAFSPDGSKLAFALSKTGSLNLYVMDLASGQIRQVTDGRSNNTEPTWFPDSQNLAFTSDQAGRPQVYKVNINGGAPQRITWEGSQNQDADVSSDGKFMVMVSSNGGQQHIAKQDLATGGVQVLSSTFLDETPSLAPNGTMVIYSSSQGMGSVLNLVSTDGRFKARLPATDGQVKFPAWSPYL.

Positions 1–21 (MKQALRVAFGFLILWASVLHA) are cleaved as a signal peptide.

Belongs to the TolB family. The Tol-Pal system is composed of five core proteins: the inner membrane proteins TolA, TolQ and TolR, the periplasmic protein TolB and the outer membrane protein Pal. They form a network linking the inner and outer membranes and the peptidoglycan layer.

The protein localises to the periplasm. Its function is as follows. Part of the Tol-Pal system, which plays a role in outer membrane invagination during cell division and is important for maintaining outer membrane integrity. TolB occupies a key intermediary position in the Tol-Pal system because it communicates directly with both membrane-embedded components, Pal in the outer membrane and TolA in the inner membrane. This Shigella dysenteriae serotype 1 (strain Sd197) protein is Tol-Pal system protein TolB.